We begin with the raw amino-acid sequence, 167 residues long: Endoribonuclease YbeY (167 aa).

Positions 131, 135, and 141 each coordinate Zn(2+).

This sequence belongs to the endoribonuclease YbeY family. It depends on Zn(2+) as a cofactor.

Its subcellular location is the cytoplasm. In terms of biological role, single strand-specific metallo-endoribonuclease involved in late-stage 70S ribosome quality control and in maturation of the 3' terminus of the 16S rRNA. The sequence is that of Endoribonuclease YbeY from Rickettsia felis (strain ATCC VR-1525 / URRWXCal2) (Rickettsia azadi).